The following is a 543-amino-acid chain: CTP synthase (543 aa).

Residues 1-265 (MTRYIFVTGG…DDFVVERFGL (265 aa)) are amidoligase domain. Ser13 provides a ligand contact to CTP. Ser13 contributes to the UTP binding site. ATP is bound by residues 14-19 (SLGKGI) and Asp71. Mg(2+) contacts are provided by Asp71 and Glu139. Residues 146 to 148 (DIE), 186 to 191 (KTKPTQ), and Lys222 each bind CTP. Residues 186 to 191 (KTKPTQ) and Lys222 contribute to the UTP site. The region spanning 290–541 (TIAMVGKYME…VNAALAQKAK (252 aa)) is the Glutamine amidotransferase type-1 domain. Gly351 is an L-glutamine binding site. Cys378 acts as the Nucleophile; for glutamine hydrolysis in catalysis. L-glutamine is bound by residues 379 to 382 (LGMQ), Glu402, and Arg469. Active-site residues include His514 and Glu516.

Belongs to the CTP synthase family. As to quaternary structure, homotetramer.

The catalysed reaction is UTP + L-glutamine + ATP + H2O = CTP + L-glutamate + ADP + phosphate + 2 H(+). It carries out the reaction L-glutamine + H2O = L-glutamate + NH4(+). It catalyses the reaction UTP + NH4(+) + ATP = CTP + ADP + phosphate + 2 H(+). Its pathway is pyrimidine metabolism; CTP biosynthesis via de novo pathway; CTP from UDP: step 2/2. Its activity is regulated as follows. Allosterically activated by GTP, when glutamine is the substrate; GTP has no effect on the reaction when ammonia is the substrate. The allosteric effector GTP functions by stabilizing the protein conformation that binds the tetrahedral intermediate(s) formed during glutamine hydrolysis. Inhibited by the product CTP, via allosteric rather than competitive inhibition. In terms of biological role, catalyzes the ATP-dependent amination of UTP to CTP with either L-glutamine or ammonia as the source of nitrogen. Regulates intracellular CTP levels through interactions with the four ribonucleotide triphosphates. The chain is CTP synthase from Ectopseudomonas mendocina (strain ymp) (Pseudomonas mendocina).